The chain runs to 132 residues: Female-specific protein 800 (132 aa).

Functionally, FS800 is likely to have some function in the production or maintenance of the schistosome egg. It may have a function unrelated to eggshell formation. In Schistosoma mansoni (Blood fluke), this protein is Female-specific protein 800.